A 31-amino-acid chain; its full sequence is EAVDFDSQCVPTADPGKCKFYFPMWNVNVFT.

A BPTI/Kunitz inhibitor domain is found at 1-31; it reads EAVDFDSQCVPTADPGKCKFYFPMWNVNVFT.

Functionally, serine protease inhibitor. Inhibits trypsin, elastase, plasmin and kallikrein. The protein is Kunitz-type serine protease inhibitor RsTIQ2 of Rhipicephalus sanguineus (Brown dog tick).